The following is an 88-amino-acid chain: Small ribosomal subunit protein bS20 (88 aa).

The protein belongs to the bacterial ribosomal protein bS20 family.

Its function is as follows. Binds directly to 16S ribosomal RNA. The sequence is that of Small ribosomal subunit protein bS20 from Mycoplasmopsis synoviae (strain 53) (Mycoplasma synoviae).